Consider the following 125-residue polypeptide: Small ribosomal subunit protein uS13 (125 aa).

The interval 91-125 is disordered; the sequence is HRRSLPVRGQNTQTNARTRKGKRKTVAGKKKAARK. A compositionally biased stretch (basic residues) spans 107–125; sequence RTRKGKRKTVAGKKKAARK.

This sequence belongs to the universal ribosomal protein uS13 family. As to quaternary structure, part of the 30S ribosomal subunit. Forms a loose heterodimer with protein S19. Forms two bridges to the 50S subunit in the 70S ribosome.

Located at the top of the head of the 30S subunit, it contacts several helices of the 16S rRNA. In the 70S ribosome it contacts the 23S rRNA (bridge B1a) and protein L5 of the 50S subunit (bridge B1b), connecting the 2 subunits; these bridges are implicated in subunit movement. Contacts the tRNAs in the A and P-sites. In Chlorobium phaeovibrioides (strain DSM 265 / 1930) (Prosthecochloris vibrioformis (strain DSM 265)), this protein is Small ribosomal subunit protein uS13.